The primary structure comprises 523 residues: MSQQVIIFDTTLRDGEQALQASLSVKEKLQIALALERMGVDVMEVGFPVSSPGDFESVQSIARTIKNSRVCALARCVEKDIDVAAESLKVAEAFRIHTFIATSPMHIATKLRSTLDEVIERAIYMVKRARNYTDDVEFSCEDAGRTPIADLARVVEAAINAGATTINIPDTVGYTMPFEYANIISGLYDRVPNIDKAIISVHTHDDLGIAVGNALAAVHAGARQVEGAMNGIGERAGNCALEEVIMAIKVRKDIMNVHTNINHHEIWRTSQTVSQICNMPIPANKAIVGTGAFAHSSGIHQDGVLKNRENYEIMTPESIGLNQVQLNLTSRSGRAAVKHRMEEMGYQESDYNLDHLYDAFLKLADKKGQVFDYDLEALAFINKQQEEPEHFRLDYFSVQSGSSDIATASIKLVCGDEIKTEAANGNGPVDAIYQAINRVTNYNIDLVKYGLSAKGHGKDALGQVDIVVDYNGRRFHGVGLATDIVESSAKAMVHVLNNIWRAAEVEKELQRKAQNKENNKETV.

Residues 5–267 (VIIFDTTLRD…HTNINHHEIW (263 aa)) form the Pyruvate carboxyltransferase domain. Residues aspartate 14, histidine 202, histidine 204, and asparagine 238 each coordinate Mn(2+). The interval 392–523 (RLDYFSVQSG…QNKENNKETV (132 aa)) is regulatory domain.

This sequence belongs to the alpha-IPM synthase/homocitrate synthase family. LeuA type 1 subfamily. In terms of assembly, homodimer. The cofactor is Mn(2+).

Its subcellular location is the cytoplasm. The catalysed reaction is 3-methyl-2-oxobutanoate + acetyl-CoA + H2O = (2S)-2-isopropylmalate + CoA + H(+). It functions in the pathway amino-acid biosynthesis; L-leucine biosynthesis; L-leucine from 3-methyl-2-oxobutanoate: step 1/4. Functionally, catalyzes the condensation of the acetyl group of acetyl-CoA with 3-methyl-2-oxobutanoate (2-ketoisovalerate) to form 3-carboxy-3-hydroxy-4-methylpentanoate (2-isopropylmalate). The polypeptide is 2-isopropylmalate synthase (Klebsiella pneumoniae (strain 342)).